The sequence spans 147 residues: Small ribosomal subunit protein uS12 (147 aa).

The protein belongs to the universal ribosomal protein uS12 family. In terms of assembly, part of the 30S ribosomal subunit.

In terms of biological role, with S4 and S5 plays an important role in translational accuracy. Located at the interface of the 30S and 50S subunits. This is Small ribosomal subunit protein uS12 from Hyperthermus butylicus (strain DSM 5456 / JCM 9403 / PLM1-5).